Reading from the N-terminus, the 217-residue chain is Ribonuclease HII (217 aa).

The 190-residue stretch at 12-201 (DLVAGVDEVG…VRTAHEARAA (190 aa)) folds into the RNase H type-2 domain. A divalent metal cation contacts are provided by aspartate 18, glutamate 19, and aspartate 110.

Belongs to the RNase HII family. It depends on Mn(2+) as a cofactor. Requires Mg(2+) as cofactor.

Its subcellular location is the cytoplasm. It catalyses the reaction Endonucleolytic cleavage to 5'-phosphomonoester.. Functionally, endonuclease that specifically degrades the RNA of RNA-DNA hybrids. This Pseudomonas syringae pv. tomato (strain ATCC BAA-871 / DC3000) protein is Ribonuclease HII.